Here is a 797-residue protein sequence, read N- to C-terminus: LVKDDMSLILSSFSLFRSSRSSPASASLAGSGHPRTTPPKIASLQSPMVEETKERIAKLFKKKEVSRSTYDTAWVGMVPSPFSSEEPCFPDCLFWLLQNQCPDGSWAQPHHHSLSPSLLNKDVLSSTLASILALQKWGLGQRHIAKGLHFLELNFASATDNSQITPLGFDIVFPAMLDYAADLSLNLRLDPTTLNDLMNRRDSELKRCTENGSAETEVYLAYIGEGMGKLHDWETVMKYQRKNGSLFNSPSTTAAAFIALGNSDCLKYLNSALKKFGSAVPAVYPLDIYSQLCIVDNLERLGISRFFSTEIQSVLDDTYRCWLQGDEEIFMDASTCGLAFRTLRMNGYKVTSDSFIKVVQDCFSSSSPGHMRDVNTTLELYRASELMLYPHEIELEKQNSRLRSLLEQELSGGSIQSSQLNAEVKQALDYPFYAVLDRMAKKKTIEHYNIDDSRILKTSFCLPSFGNKDLLSLSVQDYNRCQAIHREELREFDRWFVENRLDELEFARHKSAYYYCYFAAAATFFAPELSDARMSWAKNALMTTMVDDLFDVTGSVEEMKNLIQLVELWDVDVSTECRSHKVQILFSALKRTICEVGDRAHQLQGRSIRSHIIVIWLDLLHSMMKEVEWSRDKFVPTMDEYVSNAYVSFALGPIVLPALYLVGPKLSEEMVNHSEYHNLFKLMSMCGRLLNDIRGYEREHDDGKLNAMSLYIMNNGGEITPEVAIMEIKSWNDRQRRELLRLVLEEKSVIPKACKDLFWHMCSVVHLFYNKDDGFWSQELIEVVNQVIHQPILLSHF.

The transit peptide at Leu-1 to Met-48 directs the protein to the chloroplast. Positions Ser-21 to Gly-32 are enriched in low complexity. A disordered region spans residues Ser-21–Pro-47. Mg(2+)-binding residues include Asp-547, Asp-551, Asn-691, and Glu-699. The DDXXD motif signature appears at Asp-547–Asp-551.

The protein belongs to the terpene synthase family. Mg(2+) serves as cofactor.

The protein resides in the plastid. It localises to the chloroplast. The enzyme catalyses ent-copalyl diphosphate = ent-atiserene + diphosphate. The protein operates within secondary metabolite biosynthesis; terpenoid biosynthesis. Functionally, involved in the biosynthesis of ent-kaurene diterpenoids natural products such as oridonin, miltiradiene, eriocalyxin B and nezukol, known to exhibit antitumor, anti-inflammatory and antibacterial activities. Catalyzes the conversion of ent-copalyl diphosphate (ent-CPP) to ent-atiserene. The polypeptide is Ent-atiserene synthase KSL1, chloroplastic (Isodon japonicus (Scutellaria japonica)).